A 3387-amino-acid polypeptide reads, in one-letter code: Genome polyprotein (3387 aa).

The Cytoplasmic segment spans residues 1–100; that stretch reads MNQRKKVARP…LNILNGRKRS (100 aa). The hydrophobic; homodimerization of capsid protein C stretch occupies residues 36 to 71; it reads LFSGKGPLRMVLAFITFLRVLSIPPTAGILKRWGQL. The propeptide at 100 to 113 is ER anchor for the capsid protein C, removed in mature form by serine protease NS3; the sequence is STITLLCLIPTVMA. A helical transmembrane segment spans residues 101-117; sequence TITLLCLIPTVMAFHLS. Residues 118 to 237 are Extracellular-facing; that stretch reads TRDGEPLMIV…GAWKHAQRVE (120 aa). An N-linked (GlcNAc...) asparagine; by host glycan is attached at asparagine 182. Residues 238–258 traverse the membrane as a helical segment; sequence SWILRNPGFALLAGFMAYMIG. At 259–265 the chain is on the cytoplasmic side; it reads QTGIQRT. Residues 266–279 form a helical membrane-spanning segment; the sequence is VFFILMMLVAPSYG. Topologically, residues 280–725 are extracellular; that stretch reads MRCVGVGNRD…HQVFGSVYTT (446 aa). 4 disulfides stabilise this stretch: cysteine 282/cysteine 309, cysteine 339/cysteine 400, cysteine 353/cysteine 384, and cysteine 371/cysteine 395. Residue asparagine 346 is glycosylated (N-linked (GlcNAc...) asparagine; by host). Residues 377–390 are fusion peptide; that stretch reads DRGWGNGCGLFGKG. Residue asparagine 432 is glycosylated (N-linked (GlcNAc...) asparagine; by host). Intrachain disulfides connect cysteine 464–cysteine 564 and cysteine 581–cysteine 612. The helical transmembrane segment at 726–746 threads the bilayer; it reads MFGGVSWMVRILIGLLVLWIG. Residues 747–753 lie on the Cytoplasmic side of the membrane; that stretch reads TNSRNTS. Residues 754-774 traverse the membrane as a helical segment; the sequence is MAMSCIAVGGITLFLGFTVHA. The Extracellular portion of the chain corresponds to 775 to 1194; that stretch reads DMGCAVSWSG…MLGDTMSGRM (420 aa). Disulfide bonds link cysteine 778-cysteine 789, cysteine 829-cysteine 917, cysteine 953-cysteine 997, cysteine 1054-cysteine 1103, cysteine 1065-cysteine 1087, and cysteine 1086-cysteine 1090. N-linked (GlcNAc...) asparagine; by host glycosylation is found at asparagine 904 and asparagine 981. The helical transmembrane segment at 1195–1218 threads the bilayer; the sequence is GGQIHLAIMAVFKMSPGYVLGIFL. The Lumenal portion of the chain corresponds to 1219–1224; sequence RKLTSR. A helical membrane pass occupies residues 1225-1243; it reads ETALMVIGMAMTTVLSIPH. At 1244–1267 the chain is on the cytoplasmic side; that stretch reads DLMEFIDGISLGLILLKMVTHFDN. The helical transmembrane segment at 1268–1288 threads the bilayer; it reads TQVGTLALSLTFIKSTMPLVM. Position 1289 (alanine 1289) is a topological domain, lumenal. A helical membrane pass occupies residues 1290-1308; it reads WRTIMAVLFVVTLIPLCRT. Topologically, residues 1309-1316 are lumenal; that stretch reads SCLQKQSH. The chain crosses the membrane as a helical span at residues 1317 to 1337; sequence WVEITALILGAQALPVYLMTL. The Cytoplasmic portion of the chain corresponds to 1338–1345; sequence MKGASKRS. The helical transmembrane segment at 1346 to 1366 threads the bilayer; sequence WPLNEGIMAVGLVSLLGSALL. Residues 1367 to 1369 are Lumenal-facing; the sequence is KND. A helical transmembrane segment spans residues 1370 to 1390; sequence VPLAGPMVAGGLLLAAYVMSG. The Cytoplasmic portion of the chain corresponds to 1391–1437; the sequence is SSADLSLEKAANVQWDEMADITGSSPIIEVKQDEDGSFSIRDVEETN. The tract at residues 1397–1436 is interacts with and activates NS3 protease; the sequence is LEKAANVQWDEMADITGSSPIIEVKQDEDGSFSIRDVEET. Positions 1438–1458 form an intramembrane region, helical; it reads MITLLVKLALITVSGLYPLAI. The Cytoplasmic segment spans residues 1459-2143; it reads PVTMTLWYMW…QHALNELPES (685 aa). The 178-residue stretch at 1475–1652 folds into the Peptidase S7 domain; the sequence is SGALWDVPSP…ERIGEPDYEV (178 aa). Active-site charge relay system; for serine protease NS3 activity residues include histidine 1525, aspartate 1549, and serine 1609. One can recognise a Helicase ATP-binding domain in the interval 1654–1810; that stretch reads EDIFRKKRLT…QSNSPIEDIE (157 aa). The interval 1658 to 1661 is important for RNA-binding; sequence RKKR. 1667 to 1674 lines the ATP pocket; that stretch reads LHPGAGKT. The short motif at 1758–1761 is the DEAH box element; it reads DEAH. A Helicase C-terminal domain is found at 1820–1987; sequence TGFDWITDYQ…IIPTLFGPER (168 aa). Lysine 1862 bears the N6-acetyllysine; by host mark. A helical transmembrane segment spans residues 2144–2164; that stretch reads LETLMLVALLGAMTAGIFLFF. The Lumenal segment spans residues 2165 to 2169; that stretch reads MQGKG. Positions 2170–2190 form an intramembrane region, helical; that stretch reads IGKLSMGLIAIAVASGLLWVA. Residue glutamate 2191 is a topological domain, lumenal. A helical transmembrane segment spans residues 2192–2212; that stretch reads IQPQWIAASIILEFFLMVLLV. The Cytoplasmic segment spans residues 2213 to 2225; that stretch reads PEPEKQRTPQDNQ. Residues 2226–2246 traverse the membrane as a helical segment; sequence LIYVILTILTIIALVAANEMG. Topologically, residues 2247-2270 are lumenal; the sequence is LIEKTKTDFGFYQAKTETTILDVD. Residues 2271–2291 constitute an intramembrane region (helical); sequence LRPASAWTLYAVATTILTPML. At 2292–2301 the chain is on the lumenal side; the sequence is RHTIENTSAN. Asparagine 2297 and asparagine 2301 each carry an N-linked (GlcNAc...) asparagine; by host glycan. An intramembrane region (helical) is located at residues 2302-2322; the sequence is LSLAAIANQAAVLMGLGKGWP. Residues 2323–2343 lie on the Lumenal side of the membrane; that stretch reads LHRMDLGVPLLAMGCYSQVNP. Residues 2344-2364 traverse the membrane as a helical segment; that stretch reads TTLTASLVMLLVHYAIIGPGL. Topologically, residues 2365 to 2409 are cytoplasmic; sequence QAKATREAQKRTAAGIMKNPTVDGITVIDLEPISYDPKFEKQLGQ. A helical membrane pass occupies residues 2410–2430; it reads VMLLVLCAGQLLLMRTTWAFC. At 2431-2455 the chain is on the lumenal side; the sequence is EVLTLATGPILTLWEGNPGRFWNTT. An N-linked (GlcNAc...) asparagine; by host glycan is attached at asparagine 2453. A helical membrane pass occupies residues 2456 to 2476; that stretch reads IAVSTANIFRGSYLAGAGLAF. The Cytoplasmic segment spans residues 2477–3387; sequence SLIKNAQTPR…SAHFESEGVL (911 aa). The region spanning 2489-2751 is the mRNA cap 0-1 NS5-type MT domain; the sequence is TGTTGETLGE…DADLGAGTRS (263 aa). Serine 2543 lines the S-adenosyl-L-methionine pocket. Phosphoserine is present on serine 2543. Lysine 2548 serves as the catalytic For 2'-O-MTase activity. An SUMO-interacting motif motif is present at residues 2564 to 2567; the sequence is VVDL. S-adenosyl-L-methionine contacts are provided by glycine 2573, tryptophan 2574, threonine 2591, lysine 2592, aspartate 2618, and valine 2619. The For 2'-O-MTase activity role is filled by aspartate 2633. Isoleucine 2634 is an S-adenosyl-L-methionine binding site. Residues lysine 2668 and glutamate 2704 each act as for 2'-O-MTase activity in the active site. Tyrosine 2706 contacts S-adenosyl-L-methionine. Residues glutamate 2925, histidine 2929, cysteine 2934, and cysteine 2937 each coordinate Zn(2+). The RdRp catalytic domain maps to 3016–3166; the sequence is LIYADDTAGW…PLDERFSTSL (151 aa). Positions 3200, 3216, and 3335 each coordinate Zn(2+).

This sequence in the N-terminal section; belongs to the class I-like SAM-binding methyltransferase superfamily. mRNA cap 0-1 NS5-type methyltransferase family. In terms of assembly, homodimer. Interacts (via N-terminus) with host EXOC1 (via C-terminus); this interaction results in EXOC1 degradation through the proteasome degradation pathway. Forms heterodimers with envelope protein E in the endoplasmic reticulum and Golgi. As to quaternary structure, homodimer; in the endoplasmic reticulum and Golgi. Interacts with protein prM. Interacts with non-structural protein 1. In terms of assembly, homodimer; Homohexamer when secreted. Interacts with envelope protein E. Interacts (via N-terminus) with serine protease NS3. As to quaternary structure, forms a heterodimer with serine protease NS3. May form homooligomers. In terms of assembly, forms a heterodimer with NS2B. Interacts with NS4B. Interacts with unphosphorylated RNA-directed RNA polymerase NS5; this interaction stimulates RNA-directed RNA polymerase NS5 guanylyltransferase activity. Interacts with host SHFL. Interacts with host MAVS; this interaction inhibits the synthesis of IFN-beta. Interacts with host SHFL. Interacts with host AUP1; the interaction occurs in the presence of Dengue virus NS4B and induces lipophagy which facilitates production of virus progeny particles. As to quaternary structure, interacts with serine protease NS3. In terms of assembly, homodimer. Interacts with host STAT2; this interaction inhibits the phosphorylation of the latter, and, when all viral proteins are present (polyprotein), targets STAT2 for degradation. Interacts with serine protease NS3. Interacts with host PAF1 complex; the interaction may prevent the recruitment of the PAF1 complex to interferon-responsive genes, and thus reduces the immune response. Specific enzymatic cleavages in vivo yield mature proteins. Cleavages in the lumen of endoplasmic reticulum are performed by host signal peptidase, whereas cleavages in the cytoplasmic side are performed by serine protease NS3. Signal cleavage at the 2K-4B site requires a prior NS3 protease-mediated cleavage at the 4A-2K site. In terms of processing, cleaved in post-Golgi vesicles by a host furin, releasing the mature small envelope protein M, and peptide pr. This cleavage is incomplete as up to 30% of viral particles still carry uncleaved prM. Post-translationally, N-glycosylated. N-glycosylated. The excreted form is glycosylated and this is required for efficient secretion of the protein from infected cells. In terms of processing, acetylated by host KAT5. Acetylation modulates NS3 RNA-binding and unwinding activities and plays an important positive role for viral replication. Post-translationally, sumoylation of RNA-directed RNA polymerase NS5 increases NS5 protein stability allowing proper viral RNA replication. Phosphorylated on serines residues. This phosphorylation may trigger NS5 nuclear localization.

The protein localises to the virion. It localises to the host nucleus. Its subcellular location is the host cytoplasm. The protein resides in the host perinuclear region. It is found in the secreted. The protein localises to the virion membrane. It localises to the host endoplasmic reticulum membrane. Its subcellular location is the host mitochondrion. The catalysed reaction is Selective hydrolysis of -Xaa-Xaa-|-Yaa- bonds in which each of the Xaa can be either Arg or Lys and Yaa can be either Ser or Ala.. The enzyme catalyses RNA(n) + a ribonucleoside 5'-triphosphate = RNA(n+1) + diphosphate. It carries out the reaction a ribonucleoside 5'-triphosphate + H2O = a ribonucleoside 5'-diphosphate + phosphate + H(+). It catalyses the reaction ATP + H2O = ADP + phosphate + H(+). The catalysed reaction is a 5'-end (5'-triphosphoguanosine)-ribonucleoside in mRNA + S-adenosyl-L-methionine = a 5'-end (N(7)-methyl 5'-triphosphoguanosine)-ribonucleoside in mRNA + S-adenosyl-L-homocysteine. The enzyme catalyses a 5'-end (N(7)-methyl 5'-triphosphoguanosine)-ribonucleoside in mRNA + S-adenosyl-L-methionine = a 5'-end (N(7)-methyl 5'-triphosphoguanosine)-(2'-O-methyl-ribonucleoside) in mRNA + S-adenosyl-L-homocysteine + H(+). Plays a role in virus budding by binding to the cell membrane and gathering the viral RNA into a nucleocapsid that forms the core of a mature virus particle. During virus entry, may induce genome penetration into the host cytoplasm after hemifusion induced by the surface proteins. Can migrate to the cell nucleus where it modulates host functions. Overcomes the anti-viral effects of host EXOC1 by sequestering and degrading the latter through the proteasome degradation pathway. Functionally, inhibits RNA silencing by interfering with host Dicer. Its function is as follows. Prevents premature fusion activity of envelope proteins in trans-Golgi by binding to envelope protein E at pH6.0. After virion release in extracellular space, gets dissociated from E dimers. In terms of biological role, acts as a chaperone for envelope protein E during intracellular virion assembly by masking and inactivating envelope protein E fusion peptide. prM is the only viral peptide matured by host furin in the trans-Golgi network probably to avoid catastrophic activation of the viral fusion activity in acidic Golgi compartment prior to virion release. prM-E cleavage is inefficient, and many virions are only partially matured. These uncleaved prM would play a role in immune evasion. May play a role in virus budding. Exerts cytotoxic effects by activating a mitochondrial apoptotic pathway through M ectodomain. May display a viroporin activity. Functionally, binds to host cell surface receptor and mediates fusion between viral and cellular membranes. Envelope protein is synthesized in the endoplasmic reticulum in the form of heterodimer with protein prM. They play a role in virion budding in the ER, and the newly formed immature particle is covered with 60 spikes composed of heterodimer between precursor prM and envelope protein E. The virion is transported to the Golgi apparatus where the low pH causes dissociation of PrM-E heterodimers and formation of E homodimers. prM-E cleavage is inefficient, and many virions are only partially matured. These uncleaved prM would play a role in immune evasion. Its function is as follows. Involved in immune evasion, pathogenesis and viral replication. Once cleaved off the polyprotein, is targeted to three destinations: the viral replication cycle, the plasma membrane and the extracellular compartment. Essential for viral replication. Required for formation of the replication complex and recruitment of other non-structural proteins to the ER-derived membrane structures. Excreted as a hexameric lipoparticle that plays a role against host immune response. Antagonizing the complement function. Binds to the host macrophages and dendritic cells. Inhibits signal transduction originating from Toll-like receptor 3 (TLR3). In terms of biological role, disrupts the host endothelial glycocalyx layer of host pulmonary microvascular endothelial cells, inducing degradation of sialic acid and shedding of heparan sulfate proteoglycans. NS1 induces expression of sialidases, heparanase, and activates cathepsin L, which activates heparanase via enzymatic cleavage. These effects are probably linked to the endothelial hyperpermeability observed in severe dengue disease. Component of the viral RNA replication complex that functions in virion assembly and antagonizes the host immune response. Functionally, required cofactor for the serine protease function of NS3. May have membrane-destabilizing activity and form viroporins. Its function is as follows. Displays three enzymatic activities: serine protease, NTPase and RNA helicase. NS3 serine protease, in association with NS2B, performs its autocleavage and cleaves the polyprotein at dibasic sites in the cytoplasm: C-prM, NS2A-NS2B, NS2B-NS3, NS3-NS4A, NS4A-2K and NS4B-NS5. NS3 RNA helicase binds RNA and unwinds dsRNA in the 3' to 5' direction. In terms of biological role, regulates the ATPase activity of the NS3 helicase activity. NS4A allows NS3 helicase to conserve energy during unwinding. Plays a role in the inhibition of the host innate immune response. Interacts with host MAVS and thereby prevents the interaction between RIGI and MAVS. In turn, IFN-beta production is impaired. Interacts with host AUP1 which mediates induction of lipophagy in host cells and facilitates production of virus progeny particles. Functions as a signal peptide for NS4B and is required for the interferon antagonism activity of the latter. Functionally, induces the formation of ER-derived membrane vesicles where the viral replication takes place. Inhibits interferon (IFN)-induced host STAT1 phosphorylation and nuclear translocation, thereby preventing the establishment of cellular antiviral state by blocking the IFN-alpha/beta pathway. Its function is as follows. Replicates the viral (+) and (-) RNA genome, and performs the capping of genomes in the cytoplasm. NS5 methylates viral RNA cap at guanine N-7 and ribose 2'-O positions. Besides its role in RNA genome replication, also prevents the establishment of cellular antiviral state by blocking the interferon-alpha/beta (IFN-alpha/beta) signaling pathway. Inhibits host TYK2 and STAT2 phosphorylation, thereby preventing activation of JAK-STAT signaling pathway. May reduce immune responses by preventing the recruitment of the host PAF1 complex to interferon-responsive genes. This Dengue virus type 4 (strain Thailand/0348/1991) (DENV-4) protein is Genome polyprotein.